Reading from the N-terminus, the 1368-residue chain is DNA-directed RNA polymerase subunit beta (1368 aa).

This sequence belongs to the RNA polymerase beta chain family. In terms of assembly, the RNAP catalytic core consists of 2 alpha, 1 beta, 1 beta' and 1 omega subunit. When a sigma factor is associated with the core the holoenzyme is formed, which can initiate transcription.

The catalysed reaction is RNA(n) + a ribonucleoside 5'-triphosphate = RNA(n+1) + diphosphate. Its function is as follows. DNA-dependent RNA polymerase catalyzes the transcription of DNA into RNA using the four ribonucleoside triphosphates as substrates. This is DNA-directed RNA polymerase subunit beta from Legionella pneumophila (strain Paris).